We begin with the raw amino-acid sequence, 242 residues long: 2-C-methyl-D-erythritol 4-phosphate cytidylyltransferase (242 aa).

This sequence belongs to the IspD/TarI cytidylyltransferase family. IspD subfamily.

The catalysed reaction is 2-C-methyl-D-erythritol 4-phosphate + CTP + H(+) = 4-CDP-2-C-methyl-D-erythritol + diphosphate. It participates in isoprenoid biosynthesis; isopentenyl diphosphate biosynthesis via DXP pathway; isopentenyl diphosphate from 1-deoxy-D-xylulose 5-phosphate: step 2/6. In terms of biological role, catalyzes the formation of 4-diphosphocytidyl-2-C-methyl-D-erythritol from CTP and 2-C-methyl-D-erythritol 4-phosphate (MEP). The polypeptide is 2-C-methyl-D-erythritol 4-phosphate cytidylyltransferase (Vesicomyosocius okutanii subsp. Calyptogena okutanii (strain HA)).